The sequence spans 86 residues: Kappa-theraphotoxin-Cg1c (86 aa).

Positions 1–21 are cleaved as a signal peptide; that stretch reads MKVSVLITLAVLGVMFVWASA. A propeptide spanning residues 22 to 50 is cleaved from the precursor; the sequence is AELEERGSDHRDSPAWLKSMERIFQSEER. Intrachain disulfides connect Cys52-Cys66, Cys59-Cys71, and Cys65-Cys78.

This sequence belongs to the neurotoxin 10 (Hwtx-1) family. 28 (Jztx-11) subfamily. Expressed by the venom gland.

The protein localises to the secreted. In terms of biological role, probable ion channel inhibitor. This Chilobrachys guangxiensis (Chinese earth tiger tarantula) protein is Kappa-theraphotoxin-Cg1c.